Here is a 393-residue protein sequence, read N- to C-terminus: UPF0496 protein At2g18630 (393 aa).

Residues 1–20 (MMGGKSSKSKKNVEFGSPST) are disordered. A coiled-coil region spans residues 149–222 (VNQFEEENED…RLRNIKTWRR (74 aa)). Helical transmembrane passes span 226 to 246 (MVFV…AAVA) and 249 to 269 (PVVA…GKWC). Positions 299-356 (KEMDNISILVRKVEVEIESLLKKAEFAITEEKEVRLAIDEIKKKLDVFTETIEELGEH) form a coiled coil.

Belongs to the UPF0496 family.

The protein localises to the membrane. The sequence is that of UPF0496 protein At2g18630 from Arabidopsis thaliana (Mouse-ear cress).